A 338-amino-acid chain; its full sequence is Ketol-acid reductoisomerase (NADP(+)) (338 aa).

Positions 1–181 (MKVYYDKDAD…GGGKAGIIET (181 aa)) constitute a KARI N-terminal Rossmann domain. Residues 24-27 (YGSQ), Arg47, and Ser52 contribute to the NADP(+) site. His107 is an active-site residue. Residue Gly133 participates in NADP(+) binding. The KARI C-terminal knotted domain maps to 182–327 (NFREETETDL…EKLRAMMPWI (146 aa)). Asp190, Glu194, Glu226, and Glu230 together coordinate Mg(2+). Substrate is bound at residue Ser251.

This sequence belongs to the ketol-acid reductoisomerase family. Requires Mg(2+) as cofactor.

It catalyses the reaction (2R)-2,3-dihydroxy-3-methylbutanoate + NADP(+) = (2S)-2-acetolactate + NADPH + H(+). The enzyme catalyses (2R,3R)-2,3-dihydroxy-3-methylpentanoate + NADP(+) = (S)-2-ethyl-2-hydroxy-3-oxobutanoate + NADPH + H(+). Its pathway is amino-acid biosynthesis; L-isoleucine biosynthesis; L-isoleucine from 2-oxobutanoate: step 2/4. It participates in amino-acid biosynthesis; L-valine biosynthesis; L-valine from pyruvate: step 2/4. Involved in the biosynthesis of branched-chain amino acids (BCAA). Catalyzes an alkyl-migration followed by a ketol-acid reduction of (S)-2-acetolactate (S2AL) to yield (R)-2,3-dihydroxy-isovalerate. In the isomerase reaction, S2AL is rearranged via a Mg-dependent methyl migration to produce 3-hydroxy-3-methyl-2-ketobutyrate (HMKB). In the reductase reaction, this 2-ketoacid undergoes a metal-dependent reduction by NADPH to yield (R)-2,3-dihydroxy-isovalerate. In Variovorax paradoxus (strain S110), this protein is Ketol-acid reductoisomerase (NADP(+)).